We begin with the raw amino-acid sequence, 186 residues long: Der GTPase-activating protein YihI (186 aa).

The disordered stretch occupies residues 42 to 77 (KAREDKKKRKHKGLASGSRHSAVEEKANKLQNEIKD). Basic and acidic residues predominate over residues 62–77 (SAVEEKANKLQNEIKD).

The protein belongs to the YihI family. As to quaternary structure, interacts with Der.

Its function is as follows. A GTPase-activating protein (GAP) that modifies Der/EngA GTPase function. May play a role in ribosome biogenesis. This Haemophilus influenzae (strain ATCC 51907 / DSM 11121 / KW20 / Rd) protein is Der GTPase-activating protein YihI.